We begin with the raw amino-acid sequence, 657 residues long: Protein mono-ADP-ribosyltransferase TIPARP (657 aa).

The segment covering 1–10 (MEVETTEPEP) has biased composition (acidic residues). The segment at 1-22 (MEVETTEPEPDCVVQPPSPSDD) is disordered. Cys39 is subject to ADP-ribosylcysteine. Positions 41–48 (KKKQEQKR) match the Nuclear localization signal motif. The segment at 121–154 (QLPEAHPSTDAPEQGVPIQDHSFPPETISGTVAD) is disordered. The C3H1-type zinc finger occupies 238–265 (ENGIEICMDFLQGTCIYGRDCLKHHTVL). The WWE domain maps to 333–411 (STPPCSNSNS…RRPLFRSCFI (79 aa)). The 209-residue stretch at 449–657 (YPETWVYMHP…YEEVSNTVSI (209 aa)) folds into the PARP catalytic domain.

It belongs to the ARTD/PARP family. In terms of assembly, interacts with AHR. Auto-mono-ADP-ribosylated. Ubiquitously expressed.

The protein localises to the nucleus. The catalysed reaction is L-aspartyl-[protein] + NAD(+) = 4-O-(ADP-D-ribosyl)-L-aspartyl-[protein] + nicotinamide. It carries out the reaction L-glutamyl-[protein] + NAD(+) = 5-O-(ADP-D-ribosyl)-L-glutamyl-[protein] + nicotinamide. The enzyme catalyses L-cysteinyl-[protein] + NAD(+) = S-(ADP-D-ribosyl)-L-cysteinyl-[protein] + nicotinamide + H(+). In terms of biological role, ADP-ribosyltransferase that mediates mono-ADP-ribosylation of glutamate, aspartate and cysteine residues on target proteins. Acts as a negative regulator of AHR by mediating mono-ADP-ribosylation of AHR, leading to inhibit transcription activator activity of AHR. The chain is Protein mono-ADP-ribosyltransferase TIPARP from Mus musculus (Mouse).